A 330-amino-acid chain; its full sequence is Ferrochelatase (330 aa).

Residues His-200 and Glu-281 each contribute to the Fe cation site.

The protein belongs to the ferrochelatase family.

The protein localises to the cytoplasm. It carries out the reaction heme b + 2 H(+) = protoporphyrin IX + Fe(2+). It participates in porphyrin-containing compound metabolism; protoheme biosynthesis; protoheme from protoporphyrin-IX: step 1/1. In terms of biological role, catalyzes the ferrous insertion into protoporphyrin IX. This is Ferrochelatase from Marinomonas sp. (strain MWYL1).